Here is a 533-residue protein sequence, read N- to C-terminus: CWF19-like protein 1 homolog (533 aa).

The interval 290-314 (EMGGAEDGAGNGRKRHNDGGNDGPR) is disordered.

The protein belongs to the CWF19 family.

This chain is CWF19-like protein 1 homolog, found in Caenorhabditis elegans.